A 474-amino-acid polypeptide reads, in one-letter code: Bifunctional protein HldE (474 aa).

Positions 1–317 (MKLSMPRFDR…RRAVQREQGS (317 aa)) are ribokinase. Position 194–197 (194–197 (NLAE)) interacts with ATP. D263 is an active-site residue. The cytidylyltransferase stretch occupies residues 343-474 (FTNGCFDILH…GIVEKIRRQP (132 aa)).

This sequence in the N-terminal section; belongs to the carbohydrate kinase PfkB family. The protein in the C-terminal section; belongs to the cytidylyltransferase family. Homodimer.

It carries out the reaction D-glycero-beta-D-manno-heptose 7-phosphate + ATP = D-glycero-beta-D-manno-heptose 1,7-bisphosphate + ADP + H(+). It catalyses the reaction D-glycero-beta-D-manno-heptose 1-phosphate + ATP + H(+) = ADP-D-glycero-beta-D-manno-heptose + diphosphate. It functions in the pathway nucleotide-sugar biosynthesis; ADP-L-glycero-beta-D-manno-heptose biosynthesis; ADP-L-glycero-beta-D-manno-heptose from D-glycero-beta-D-manno-heptose 7-phosphate: step 1/4. The protein operates within nucleotide-sugar biosynthesis; ADP-L-glycero-beta-D-manno-heptose biosynthesis; ADP-L-glycero-beta-D-manno-heptose from D-glycero-beta-D-manno-heptose 7-phosphate: step 3/4. Catalyzes the phosphorylation of D-glycero-D-manno-heptose 7-phosphate at the C-1 position to selectively form D-glycero-beta-D-manno-heptose-1,7-bisphosphate. Its function is as follows. Catalyzes the ADP transfer from ATP to D-glycero-beta-D-manno-heptose 1-phosphate, yielding ADP-D-glycero-beta-D-manno-heptose. The protein is Bifunctional protein HldE of Azotobacter vinelandii (strain DJ / ATCC BAA-1303).